The primary structure comprises 443 residues: L-ornithine N(5)-monooxygenase (443 aa).

FAD contacts are provided by residues 45-53 (DKQGDYRWH) and Gln64. Lys69 lines the substrate pocket. Val130 is an FAD binding site. NADP(+) contacts are provided by residues 215 to 218 (GGQS) and Arg240. Residues 254–257 (NEVF) and Asn284 contribute to the substrate site. 284–286 (NYS) serves as a coordination point for NADP(+). 407-409 (TLL) contributes to the FAD binding site. Ser410 is a substrate binding site.

It belongs to the lysine N(6)-hydroxylase/L-ornithine N(5)-oxygenase family. As to quaternary structure, homotetramer. FAD serves as cofactor.

The protein localises to the cell inner membrane. It catalyses the reaction L-ornithine + NADPH + O2 = N(5)-hydroxy-L-ornithine + NADP(+) + H2O. The protein operates within siderophore biosynthesis; pyoverdin biosynthesis. In terms of biological role, catalyzes the conversion of L-ornithine to N(5)-hydroxyornithine, the first step in the biosynthesis of all hydroxamate-containing siderophores, such as pyoverdin. Pyoverdin is a hydroxamate siderophore composed of a 6,7-dihydroxyquinoline-containing fluorescent chromophore joined to the N-terminus of a partly cyclic octapeptide (D-Ser-L-Arg-D-Ser-L-N(5)-OH-Orn-L-Lys-L-N(5)-OH-Orn-L-Thr-L-Thr in strain PAO1). Specific for NADPH, which plays a role in stabilization of the C4a-hydroperoxyflavin intermediate. The protein is L-ornithine N(5)-monooxygenase of Pseudomonas aeruginosa (strain ATCC 15692 / DSM 22644 / CIP 104116 / JCM 14847 / LMG 12228 / 1C / PRS 101 / PAO1).